Consider the following 889-residue polypeptide: 97 kDa heat shock protein (889 aa).

Disordered regions lie at residues 504–622 and 812–889; these read EDAM…ATTD and FVCD…MELD. Positions 549–585 are enriched in basic and acidic residues; the sequence is SADKEEQADNGSKETSKDSKDQTSESSKSDKESKDQN. Over residues 586-597 the composition is skewed to polar residues; the sequence is SEGSKSDNSSTE. A compositionally biased stretch (basic and acidic residues) spans 869-889; the sequence is ASKEGETKPDETKPDVEMELD.

It belongs to the heat shock protein 70 family.

In terms of biological role, cell surface recognition protein that binds acrosome-reacted sperm and thereby mediates binding and subsequent fusion of the sperm and egg. This Strongylocentrotus purpuratus (Purple sea urchin) protein is 97 kDa heat shock protein.